We begin with the raw amino-acid sequence, 78 residues long: Mitotic-spindle organizing protein 1 (78 aa).

The residue at position 2 (alanine 2) is an N-acetylalanine.

Belongs to the MOZART1 family. In terms of assembly, associates with the gamma-tubulin ring complex (gTuRC) consisting of TUBGCP2, TUBGCP3, TUBGCP4, TUBGCP5 and TUBGCP6 and gamma-tubulin TUBG1 or TUBG2; within the complex, interacts with TUBGCP3 and TUBGCP6 to form a luminal bridge with actin that stabilizes the initial structure during complex assembly. Interacts with TUBG1.

It localises to the cytoplasm. Its subcellular location is the cytoskeleton. The protein resides in the microtubule organizing center. The protein localises to the centrosome. It is found in the spindle. Required for the recruitment and the assembly of the gamma-tubulin ring complex (gTuRC) at the centrosome. The gTuRC regulates the minus-end nucleation of alpha-beta tubulin heterodimers that grow into microtubule protafilaments, a critical step in centrosome duplication and spindle formation. The sequence is that of Mitotic-spindle organizing protein 1 (Mzt1) from Mus musculus (Mouse).